Here is a 132-residue protein sequence, read N- to C-terminus: Phosphoribosyl-AMP cyclohydrolase (132 aa).

D82 provides a ligand contact to Mg(2+). C83 lines the Zn(2+) pocket. Mg(2+) is bound by residues D84 and D86. Residues C100 and C107 each coordinate Zn(2+).

Belongs to the PRA-CH family. As to quaternary structure, homodimer. Requires Mg(2+) as cofactor. Zn(2+) is required as a cofactor.

It localises to the cytoplasm. It carries out the reaction 1-(5-phospho-beta-D-ribosyl)-5'-AMP + H2O = 1-(5-phospho-beta-D-ribosyl)-5-[(5-phospho-beta-D-ribosylamino)methylideneamino]imidazole-4-carboxamide. It functions in the pathway amino-acid biosynthesis; L-histidine biosynthesis; L-histidine from 5-phospho-alpha-D-ribose 1-diphosphate: step 3/9. Functionally, catalyzes the hydrolysis of the adenine ring of phosphoribosyl-AMP. The sequence is that of Phosphoribosyl-AMP cyclohydrolase from Dechloromonas aromatica (strain RCB).